Here is a 558-residue protein sequence, read N- to C-terminus: Coiled-coil domain-containing protein 63 (558 aa).

Residues 1-26 (MPTKKHRRKDPESPQEPSEKTKEQLV) form a disordered region. Positions 9–26 (KDPESPQEPSEKTKEQLV) are enriched in basic and acidic residues. Coiled-coil stretches lie at residues 48-289 (NFRS…KAKK) and 339-416 (VTEL…VENL). The interval 531–558 (HYATRESRNRDSMPEKGDELKSKKKVTV) is disordered. Residues 533-551 (ATRESRNRDSMPEKGDELK) show a composition bias toward basic and acidic residues.

Functionally, plays a role in spermiogenesis. Involved in the elongation of flagella and the formation of sperm heads. This Bos taurus (Bovine) protein is Coiled-coil domain-containing protein 63.